We begin with the raw amino-acid sequence, 335 residues long: MTSDGATSTSAAAAAAAMATRRKPSWRERENNRRRERRRRAVAAKIYTGLRAQGNYNLPKHCDNNEVLKALCSEAGWVVEEDGTTYRKGHKPLPGDMAGSSSRATPYSSHNQSPLSSTFDSPILSYQVSPSSSSFPSPSRVGDPHNISTIFPFLRNGGIPSSLPPLRISNSAPVTPPVSSPTSRNPKPLPTWESFTKQSMSMAAKQSMTSLNYPFYAVSAPASPTHHRQFHAPATIPECDESDSSTVDSGHWISFQKFAQQQPFSASMVPTSPTFNLVKPAPQQLSPNTAAIQEIGQSSEFKFENSQVKPWEGERIHDVAMEDLELTLGNGKAHS.

Positions 1 to 19 (MTSDGATSTSAAAAAAAMA) are enriched in low complexity. 3 disordered regions span residues 1–40 (MTSD…RRRR), 85–122 (TYRK…FDSP), and 164–190 (PPLR…KPLP). The required for DNA-binding stretch occupies residues 22–103 (RKPSWREREN…PGDMAGSSSR (82 aa)). A compositionally biased stretch (polar residues) spans 99–120 (GSSSRATPYSSHNQSPLSSTFD). Thr-175 is modified (phosphothreonine). The tract at residues 231–251 (HAPATIPECDESDSSTVDSGH) is PEST-like.

It belongs to the BZR/LAT61 family. As to quaternary structure, interacts with ASK7/BIN2 through its C-terminal domain and with the bHLH transcription factors BIM1, BIM2 and BIM3 through its C- and N-terminal domains. Interacts (via N-terminus) with REF6 and ELF6. Interacts with MYB30. Interacts with IWS1. Interacts with ASHH2/SDG8. Binds to MYB56 when dephosphorylated in the nucleus of quiescent center (QC) cells. Binds to WRKY46, WRKY54 and WRKY70 to cooperatively regulate the expression of target genes. Phosphorylated by ASK7/BIN2. Phosphorylation increases protein degradation and/or interferes with the nuclear localization. As to expression, ubiquitously expressed in cotyledons, leaves, hypocotyls and roots.

It is found in the nucleus. The protein resides in the cytoplasm. Positive regulator of brassinosteroid (BR) signaling. Transcription factor that activates target gene expression by binding specifically to the DNA sequence 5'-CANNTG-3'(E box) through its N-terminal domain. Can bind individually to the promoter as a homodimer or synergistically as a heterodimer with BIM1, BIM2 or BIM3. The C-terminal domain is probably involved in transcriptional activation. Recruits the transcription elongation factor IWS1 to control BR-regulated gene expression. Forms a trimeric complex with IWS1 and ASHH2/SDG8 to regulate BR-regulated gene expression. Promotes quiescent center (QC) self-renewal by cell divisions in the primary root. Binds to the E-boxes of the BRAVO promoter to repress its expression. The polypeptide is Protein BRASSINAZOLE-RESISTANT 2 (Arabidopsis thaliana (Mouse-ear cress)).